Here is a 411-residue protein sequence, read N- to C-terminus: Probable peptidoglycan glycosyltransferase FtsW (411 aa).

At 1 to 40 the chain is on the cytoplasmic side; that stretch reads MLERMLPFLGRKRDKAAADLPVRVGHSAPRNSRMLEYDQN. The helical transmembrane segment at 41-61 threads the bilayer; it reads LVWVTLLLLAYGLVMVYSATI. At 62–81 the chain is on the periplasmic side; the sequence is SFHDSPRYAQWSPYHYFIRD. Residues 82–102 traverse the membrane as a helical segment; that stretch reads LFSIAAALLASWIVVQIPMAE. Residues 103-109 are Cytoplasmic-facing; sequence LQKWSMR. A helical transmembrane segment spans residues 110-130; sequence FFFLSLIGLVLVLLPHIGKDV. At 131-136 the chain is on the periplasmic side; the sequence is NGSKRW. Residues 137–157 form a helical membrane-spanning segment; that stretch reads VVFPGGLNFQPSELVKLTALI. The Cytoplasmic portion of the chain corresponds to 158–172; that stretch reads YAADFMVRKQEVKQS. The chain crosses the membrane as a helical span at residues 173-193; the sequence is LLKTFLPMMAVMMIVGVLLLA. At 194-196 the chain is on the periplasmic side; that stretch reads EPD. A helical transmembrane segment spans residues 197 to 217; it reads MGAFLVIASITLAILFLGGAN. Over 218–219 the chain is Cytoplasmic; it reads GK. The chain crosses the membrane as a helical span at residues 220-240; it reads LFSVFSVAVIGAFVLMIVLSP. Topologically, residues 241–298 are periplasmic; it reads WRRDRIFAYLNPWSESNALGSAYQLSHALIAMGRGEWFGVGLGGSIEKLHYLPEAHTD. Residues 299–319 traverse the membrane as a helical segment; sequence FLLAIIGEELGLVGVGVVIFA. Residues 320 to 347 are Cytoplasmic-facing; sequence FYWIVRRAFDIGRQALVLDRMYSALVAQ. The helical transmembrane segment at 348–368 threads the bilayer; sequence GIGVWIGGQAFINIGVNLGLL. The Periplasmic segment spans residues 369-374; it reads PTKGLT. Residues 375–395 form a helical membrane-spanning segment; that stretch reads LPLMSYGGSALLLNCMAIAVL. The Cytoplasmic segment spans residues 396 to 411; sequence LRVDFENRILMRGGHV.

The protein belongs to the SEDS family. FtsW subfamily.

It localises to the cell inner membrane. It carries out the reaction [GlcNAc-(1-&gt;4)-Mur2Ac(oyl-L-Ala-gamma-D-Glu-L-Lys-D-Ala-D-Ala)](n)-di-trans,octa-cis-undecaprenyl diphosphate + beta-D-GlcNAc-(1-&gt;4)-Mur2Ac(oyl-L-Ala-gamma-D-Glu-L-Lys-D-Ala-D-Ala)-di-trans,octa-cis-undecaprenyl diphosphate = [GlcNAc-(1-&gt;4)-Mur2Ac(oyl-L-Ala-gamma-D-Glu-L-Lys-D-Ala-D-Ala)](n+1)-di-trans,octa-cis-undecaprenyl diphosphate + di-trans,octa-cis-undecaprenyl diphosphate + H(+). The protein operates within cell wall biogenesis; peptidoglycan biosynthesis. In terms of biological role, peptidoglycan polymerase that is essential for cell division. This is Probable peptidoglycan glycosyltransferase FtsW from Thiomonas intermedia (strain K12) (Thiobacillus intermedius).